The sequence spans 317 residues: MKVLWVALVITLLAGCQAEEVKPAPEPEVQLGQEWPGWQGSQPWEQALGRFWDYLRWVQTLSDQVQEELLSTQVIQELTVLMDETMKEVKAYREELEEQLGPVAQETQARVSKELQAAQARLASDMQDVRGRLAQYRSEVQAMMGHTTDELRDRLASHLRKLRKRLLRDAEDLQKRLAVYRAGALEGSERSVSAIRERLGPLVEQGRARAATVGTLASQTLRERAEAWHQKLRGRVEEMGTQARDHLEEMREQLDEVRAKVEEQGTQMRLQAEAFQARLKSWFEPLVEDMQRQWAGLVEKVQLAMATSSTSAPSENH.

The first 18 residues, 1-18, serve as a signal peptide directing secretion; it reads MKVLWVALVITLLAGCQA. Tandem repeats lie at residues 80–101, 102–123, 124–145, 146–167, 168–189, 190–211, 212–233, and 234–255. The interval 80–255 is 8 X 22 AA approximate tandem repeats; it reads VLMDETMKEV…HLEEMREQLD (176 aa). Met143 is modified (methionine sulfoxide). Residues 158–168 are LDL and other lipoprotein receptors binding; that stretch reads HLRKLRKRLLR. 162 to 165 is a binding site for heparin; sequence LRKR. The tract at residues 210–290 is lipid-binding and lipoprotein association; it reads AATVGTLASQ…SWFEPLVEDM (81 aa). 229–236 is a binding site for heparin; sequence HQKLRGRV. The segment at 266–317 is homooligomerization; it reads TQMRLQAEAFQARLKSWFEPLVEDMQRQWAGLVEKVQLAMATSSTSAPSENH. The specificity for association with VLDL stretch occupies residues 278-290; the sequence is RLKSWFEPLVEDM.

The protein belongs to the apolipoprotein A1/A4/E family. As to quaternary structure, homotetramer. May interact with ABCA1; functionally associated with ABCA1 in the biogenesis of HDLs. May interact with APP/A4 amyloid-beta peptide; the interaction is extremely stable in vitro but its physiological significance is unclear. May interact with MAPT. May interact with MAP2. In the cerebrospinal fluid, interacts with secreted SORL1. Interacts with PMEL; this allows the loading of PMEL luminal fragment on ILVs to induce fibril nucleation. In terms of processing, APOE exists as multiple glycosylated and sialylated glycoforms within cells and in plasma. The extent of glycosylation and sialylation are tissue and context specific. Glycated in plasma VLDL. Post-translationally, phosphorylated by FAM20C in the extracellular medium.

It is found in the secreted. The protein resides in the extracellular space. It localises to the extracellular matrix. Its subcellular location is the extracellular vesicle. The protein localises to the endosome. It is found in the multivesicular body. In terms of biological role, APOE is an apolipoprotein, a protein associating with lipid particles, that mainly functions in lipoprotein-mediated lipid transport between organs via the plasma and interstitial fluids. APOE is a core component of plasma lipoproteins and is involved in their production, conversion and clearance. Apolipoproteins are amphipathic molecules that interact both with lipids of the lipoprotein particle core and the aqueous environment of the plasma. As such, APOE associates with chylomicrons, chylomicron remnants, very low density lipoproteins (VLDL) and intermediate density lipoproteins (IDL) but shows a preferential binding to high-density lipoproteins (HDL). It also binds a wide range of cellular receptors including the LDL receptor/LDLR and the very low-density lipoprotein receptor/VLDLR that mediate the cellular uptake of the APOE-containing lipoprotein particles. Finally, APOE also has a heparin-binding activity and binds heparan-sulfate proteoglycans on the surface of cells, a property that supports the capture and the receptor-mediated uptake of APOE-containing lipoproteins by cells. The polypeptide is Apolipoprotein E (APOE) (Physeter macrocephalus (Sperm whale)).